We begin with the raw amino-acid sequence, 367 residues long: Septin-1 (367 aa).

A Septin-type G domain is found at 22 to 296; the sequence is KGFDFTLMVA…EGYRARCLQS (275 aa). Residues 32–39 are G1 motif; sequence GESGLGKS. Residues 32–39, T66, G92, and 171–179 contribute to the GTP site; these read GESGLGKS and KADALMPKE. Residues 89-92 form a G3 motif region; the sequence is DTPG. Residues 170–173 form a G4 motif region; that stretch reads GKAD. Phosphoserine is present on S206. GTP is bound by residues G229 and R245. Residue S248 is modified to Phosphoserine; by AURKB. The residue at position 251 (T251) is a Phosphothreonine. A phosphoserine; by AURKB mark is found at S307 and S315.

This sequence belongs to the TRAFAC class TrmE-Era-EngA-EngB-Septin-like GTPase superfamily. Septin GTPase family. Septins polymerize into heterooligomeric protein complexes that form filaments, and can associate with cellular membranes, actin filaments and microtubules. GTPase activity is required for filament formation. Interacts with AURKB.

It is found in the cytoplasm. The protein resides in the cytoskeleton. It localises to the microtubule organizing center. The protein localises to the centrosome. Its subcellular location is the midbody. Its function is as follows. Filament-forming cytoskeletal GTPase. May play a role in cytokinesis (Potential). The polypeptide is Septin-1 (Bos taurus (Bovine)).